The following is a 369-amino-acid chain: uncharacterized protein (369 aa).

It to A.pernix APE1276 and APE1804.

This is an uncharacterized protein from Saccharolobus solfataricus (strain ATCC 35092 / DSM 1617 / JCM 11322 / P2) (Sulfolobus solfataricus).